Reading from the N-terminus, the 281-residue chain is MITSAHIDDIRTQVRAWRAKGETVAFVPTMGNLHQGHITLVKEAASKCDHVVASIFVNPMQFGQNEDLDAYPRTLAADSEALTAAGAELLFTPTPTVMYPKGLEQQTYVEVPGISNVLCGASRPGHFRGVATIVCKLFNIVQPDVALFGNKDYQQLLVIKTMVEDLSLPIEIIGVDTIREDSGLAMSSRNGYLTAAEKAAAPALKQAIDAMAAGIKQGESFEQMTEQAKACLVAAGFTPDYLEIRHAHTLEQAQNQDHALVILAAAYIGKARLIDNLRFDR.

An ATP-binding site is contributed by 30 to 37 (MGNLHQGH). The active-site Proton donor is His37. Gln61 contacts (R)-pantoate. Beta-alanine is bound at residue Gln61. 149–152 (GNKD) contacts ATP. Gln155 serves as a coordination point for (R)-pantoate. ATP-binding positions include Ile178 and 186–189 (MSSR).

This sequence belongs to the pantothenate synthetase family. In terms of assembly, homodimer.

It localises to the cytoplasm. It carries out the reaction (R)-pantoate + beta-alanine + ATP = (R)-pantothenate + AMP + diphosphate + H(+). The protein operates within cofactor biosynthesis; (R)-pantothenate biosynthesis; (R)-pantothenate from (R)-pantoate and beta-alanine: step 1/1. Its function is as follows. Catalyzes the condensation of pantoate with beta-alanine in an ATP-dependent reaction via a pantoyl-adenylate intermediate. The sequence is that of Pantothenate synthetase from Shewanella baltica (strain OS185).